We begin with the raw amino-acid sequence, 521 residues long: MHLNLAGLAVAATAFLATASALSPQDIPADLPVSNLLTKAQTHLSRGETNEALVYYDAAIARDPTNYLSLFKRATAYLSLGRTSQATEDFNKVLSLKPGFEGAHLQLARLRAKAGDWDAAKAQYGLAGKAPKSAEFVELEEAKLAAHLADMASKGGKWEECVSHAGTAIVVASRSPHLRELRAHCRFELGDVELALSDLQHVLHMKPGDTSPHIVISATSFYALGDLENGIGQVKKCLQSDPDSKICKKLHKQEKKVEKAYKKIQGQLSRGQPTTAGRALVGTADDSGLVPDVRKQVEELKKNKSIPKTARIQLLENLIEMTCQAYTESSHKEAAKYCDESLQLNPDSFWGLLHKGKAQLKSELYDAAIATLEKAAEIRPDQKEKVNPILNKAHIALKRSKTKDYYKVLGVENDADERQIKSAYRKQSKIFHPDKAAKQGIPKEEAEKKMASINEAYEVLSDPELRARFDRGDDPNSQERPNPFQGQGNPFGGGHPFMFQQGGGGGGPNIKFQFGGQPFGF.

The signal sequence occupies residues 1-21 (MHLNLAGLAVAATAFLATASA). TPR repeat units follow at residues 33 to 66 (VSNL…DPTN), 67 to 100 (YLSL…KPGF), 102 to 134 (GAHL…PKSA), 176 to 209 (PHLR…KPGD), 211 to 244 (SPHI…DPDS), 315 to 348 (LENL…NPDS), and 349 to 382 (FWGL…RPDQ). A J domain is found at 404 to 473 (DYYKVLGVEN…ELRARFDRGD (70 aa)). The span at 464–474 (ELRARFDRGDD) shows a compositional bias: basic and acidic residues. The tract at residues 464–521 (ELRARFDRGDDPNSQERPNPFQGQGNPFGGGHPFMFQQGGGGGGPNIKFQFGGQPFGF) is disordered. The span at 489 to 508 (NPFGGGHPFMFQQGGGGGGP) shows a compositional bias: gly residues. Residues 509–521 (NIKFQFGGQPFGF) are compositionally biased toward low complexity.

Its subcellular location is the endoplasmic reticulum lumen. Its function is as follows. Endoplasmic reticulum co-chaperone required for the of virulence factors such as PG1, the major endopolygalacturonase produced during the infection of tomato plants. The protein is Tetratricopeptide repeat and J domain-containing co-chaperone DNJ1 of Fusarium oxysporum f. sp. lycopersici (strain 4287 / CBS 123668 / FGSC 9935 / NRRL 34936) (Fusarium vascular wilt of tomato).